A 211-amino-acid polypeptide reads, in one-letter code: Large ribosomal subunit protein uL3 (211 aa).

The disordered stretch occupies residues 130 to 154 (RGPMAHGSKFHRHQGSNGSATTPGR).

It belongs to the universal ribosomal protein uL3 family. In terms of assembly, part of the 50S ribosomal subunit. Forms a cluster with proteins L14 and L19.

Functionally, one of the primary rRNA binding proteins, it binds directly near the 3'-end of the 23S rRNA, where it nucleates assembly of the 50S subunit. This Lachnospira eligens (strain ATCC 27750 / DSM 3376 / VPI C15-48 / C15-B4) (Eubacterium eligens) protein is Large ribosomal subunit protein uL3.